A 351-amino-acid polypeptide reads, in one-letter code: Anthranilate phosphoribosyltransferase (351 aa).

Residues Gly-80, Gly-83–Asp-84, Thr-88, Asn-90–Thr-93, Lys-108–Ser-116, and Ser-120 contribute to the 5-phospho-alpha-D-ribose 1-diphosphate site. Gly-80 contributes to the anthranilate binding site. A Mg(2+)-binding site is contributed by Ser-92. Residue Asn-111 participates in anthranilate binding. Anthranilate is bound at residue Arg-166. Residues Asp-229 and Glu-230 each contribute to the Mg(2+) site.

This sequence belongs to the anthranilate phosphoribosyltransferase family. In terms of assembly, homodimer. Requires Mg(2+) as cofactor.

It catalyses the reaction N-(5-phospho-beta-D-ribosyl)anthranilate + diphosphate = 5-phospho-alpha-D-ribose 1-diphosphate + anthranilate. It functions in the pathway amino-acid biosynthesis; L-tryptophan biosynthesis; L-tryptophan from chorismate: step 2/5. In terms of biological role, catalyzes the transfer of the phosphoribosyl group of 5-phosphorylribose-1-pyrophosphate (PRPP) to anthranilate to yield N-(5'-phosphoribosyl)-anthranilate (PRA). In Chlorobium limicola (strain DSM 245 / NBRC 103803 / 6330), this protein is Anthranilate phosphoribosyltransferase.